Reading from the N-terminus, the 996-residue chain is Sodium/potassium-transporting ATPase subunit alpha-A (996 aa).

2 consecutive transmembrane segments (helical) span residues 73 to 93 (LFGG…IAYT) and 107 to 123 (LYLG…TGCF). The disordered stretch occupies residues 191-211 (DNSSLTGESEPQSRSTECTND). The next 2 membrane-spanning stretches (helical) occupy residues 268–290 (FIHI…SFLY) and 297–325 (AAIF…TLTA). D353 acts as the 4-aspartylphosphate intermediate in catalysis. K483 contributes to the ATP binding site. Mg(2+)-binding residues include D692 and D696. 4 helical membrane-spanning segments follow: residues 762 to 785 (LSPF…ILCI), 820 to 847 (ERLI…VIMG), 889 to 909 (YTCH…DLII), and 926 to 951 (TLNF…DKGL).

This sequence belongs to the cation transport ATPase (P-type) (TC 3.A.3) family. Type IIC subfamily. The sodium/potassium-transporting ATPase is composed of a catalytic alpha subunit, an auxiliary non-catalytic beta subunit and an additional regulatory subunit.

The protein resides in the cell membrane. The catalysed reaction is K(+)(out) + Na(+)(in) + ATP + H2O = K(+)(in) + Na(+)(out) + ADP + phosphate + H(+). In terms of biological role, this is the catalytic component of the active enzyme, which catalyzes the hydrolysis of ATP coupled with the exchange of sodium and potassium ions across the plasma membrane. This action creates the electrochemical gradient of sodium and potassium ions, providing the energy for active transport of various nutrients. In Artemia franciscana (Brine shrimp), this protein is Sodium/potassium-transporting ATPase subunit alpha-A.